We begin with the raw amino-acid sequence, 469 residues long: Trigger factor (469 aa).

The region spanning 165-250 (GDCVTIDYLG…VKAISKPDEL (86 aa)) is the PPIase FKBP-type domain. Residues 439–460 (EYDESDLTEKKPEKKKGVEKTP) show a composition bias toward basic and acidic residues. Residues 439–469 (EYDESDLTEKKPEKKKGVEKTPIRKKAPKKG) are disordered.

It belongs to the FKBP-type PPIase family. Tig subfamily.

The protein resides in the cytoplasm. It catalyses the reaction [protein]-peptidylproline (omega=180) = [protein]-peptidylproline (omega=0). Functionally, involved in protein export. Acts as a chaperone by maintaining the newly synthesized protein in an open conformation. Functions as a peptidyl-prolyl cis-trans isomerase. The chain is Trigger factor from Bartonella quintana (strain Toulouse) (Rochalimaea quintana).